A 120-amino-acid chain; its full sequence is uncharacterized protein (120 aa).

An N-acetyltransferase domain is found at 3–120 (IRYKKAFEKI…EKCEICHGSE (118 aa)).

This is an uncharacterized protein from Bacillus methanolicus.